A 454-amino-acid chain; its full sequence is tRNA modification GTPase MnmE (454 aa).

Positions 23, 80, and 120 each coordinate (6S)-5-formyl-5,6,7,8-tetrahydrofolate. The TrmE-type G domain maps to 216-377 (GMKVVIAGRP…LRSHLKEAMG (162 aa)). N226 provides a ligand contact to K(+). GTP contacts are provided by residues 226–231 (NAGKSS), 245–251 (TDIAGTT), 270–273 (DTAG), and 358–360 (SAR). S230 contacts Mg(2+). 3 residues coordinate K(+): T245, I247, and T250. Residue T251 coordinates Mg(2+). K454 is a (6S)-5-formyl-5,6,7,8-tetrahydrofolate binding site.

This sequence belongs to the TRAFAC class TrmE-Era-EngA-EngB-Septin-like GTPase superfamily. TrmE GTPase family. Homodimer. Heterotetramer of two MnmE and two MnmG subunits. It depends on K(+) as a cofactor.

It is found in the cytoplasm. Functionally, exhibits a very high intrinsic GTPase hydrolysis rate. Involved in the addition of a carboxymethylaminomethyl (cmnm) group at the wobble position (U34) of certain tRNAs, forming tRNA-cmnm(5)s(2)U34. This is tRNA modification GTPase MnmE from Proteus mirabilis (strain HI4320).